Here is a 691-residue protein sequence, read N- to C-terminus: DNA topoisomerase 1 (691 aa).

The Toprim domain maps to Asp-3–Thr-114. 2 residues coordinate Mg(2+): Glu-9 and Asp-82. The 430-residue stretch at Asn-129–Val-558 folds into the Topo IA-type catalytic domain. The segment at Ser-163–Gln-168 is interaction with DNA. The active-site O-(5'-phospho-DNA)-tyrosine intermediate is Tyr-298. 3 consecutive C4-type zinc fingers follow at residues Cys-579–Cys-605, Cys-619–Cys-647, and Cys-660–Cys-683.

This sequence belongs to the type IA topoisomerase family. As to quaternary structure, monomer. Interacts with the RNA polymerase core. Requires Mg(2+) as cofactor.

It carries out the reaction ATP-independent breakage of single-stranded DNA, followed by passage and rejoining.. Functionally, releases the supercoiling and torsional tension of DNA, which is introduced during the DNA replication and transcription, by transiently cleaving and rejoining one strand of the DNA duplex. Introduces a single-strand break via transesterification at a target site in duplex DNA. The scissile phosphodiester is attacked by the catalytic tyrosine of the enzyme, resulting in the formation of a DNA-(5'-phosphotyrosyl)-enzyme intermediate and the expulsion of a 3'-OH DNA strand. The free DNA strand then undergoes passage around the unbroken strand, thus removing DNA supercoils. Finally, in the religation step, the DNA 3'-OH attacks the covalent intermediate to expel the active-site tyrosine and restore the DNA phosphodiester backbone. This Bacillus subtilis (strain 168) protein is DNA topoisomerase 1.